Consider the following 162-residue polypeptide: Caveolin-2 (162 aa).

Residues 1–86 (MGLETEKADV…FEISKYVMYK (86 aa)) are Cytoplasmic-facing. Residue tyrosine 19 is modified to Phosphotyrosine; by SRC. Residues serine 20 and serine 23 each carry the phosphoserine modification. Tyrosine 27 carries the phosphotyrosine; by SRC modification. Serine 36 is subject to Phosphoserine. An intramembrane region (helical) is located at residues 87–107 (FLTVFLAIPLAFIAGILFATL). Residues 108 to 162 (SCLHIWILMPFVKTCLMVLPSVQTIWKSVTDVIIAPLCTSVGRSFSSVSLQLSQD) lie on the Cytoplasmic side of the membrane.

It belongs to the caveolin family. As to quaternary structure, monomer or homodimer. Interacts with CAV1; the interaction forms a stable heterooligomeric complex that is required for targeting to lipid rafts and for caveolae formation. Tyrosine phosphorylated forms do not form heterooligomers with the Tyr-19-phosphorylated form existing as a monomer or dimer, and the Tyr-27-form as a monomer only. Interacts (tyrosine phosphorylated form) with the SH2 domain-containing proteins, RASA1, NCK1 and SRC. Interacts (tyrosine phosphorylated form) with INSR, the interaction (Tyr-27-phosphorylated form) is increased on insulin stimulation. Interacts (Tyr-19 phosphorylated form) with MAPK1 (phosphorylated form); the interaction, promoted by insulin, leads to nuclear location and MAPK1 activation. Interacts with STAT3; the interaction is increased on insulin-induced tyrosine phosphorylation leading to STAT activation. Phosphorylated on serine and tyrosine residues. CAV1 promotes phosphorylation on Ser-23 which then targets the complex to the plasma membrane, lipid rafts and caveolae. Phosphorylation on Ser-36 appears to modulate mitosis in endothelial cells. Phosphorylation on both Tyr-19 and Tyr-27 is required for insulin-induced 'Ser-727' phosphorylation of STAT3 and its activation. Phosphorylation on Tyr-19 is required for insulin-induced phosphorylation of MAPK1 and DNA binding of STAT3. Tyrosine phosphorylation is induced by both EGF and insulin (By. similarity).

Its subcellular location is the nucleus. It is found in the cytoplasm. It localises to the golgi apparatus membrane. The protein resides in the cell membrane. The protein localises to the membrane. Its subcellular location is the caveola. May act as a scaffolding protein within caveolar membranes. Interacts directly with G-protein alpha subunits and can functionally regulate their activity. Acts as an accessory protein in conjunction with CAV1 in targeting to lipid rafts and driving caveolae formation. The Ser-36 phosphorylated form has a role in modulating mitosis in endothelial cells. Positive regulator of cellular mitogenesis of the MAPK signaling pathway. Required for the insulin-stimulated nuclear translocation and activation of MAPK1 and STAT3, and the subsequent regulation of cell cycle progression. The protein is Caveolin-2 (CAV2) of Pongo abelii (Sumatran orangutan).